The following is a 74-amino-acid chain: Small ribosomal subunit protein bS18 (74 aa).

This sequence belongs to the bacterial ribosomal protein bS18 family. In terms of assembly, part of the 30S ribosomal subunit. Forms a tight heterodimer with protein bS6.

Binds as a heterodimer with protein bS6 to the central domain of the 16S rRNA, where it helps stabilize the platform of the 30S subunit. The protein is Small ribosomal subunit protein bS18 of Alkalilimnicola ehrlichii (strain ATCC BAA-1101 / DSM 17681 / MLHE-1).